The primary structure comprises 105 residues: Met repressor (105 aa).

This sequence belongs to the MetJ family. As to quaternary structure, homodimer.

The protein localises to the cytoplasm. Its function is as follows. This regulatory protein, when combined with SAM (S-adenosylmethionine) represses the expression of the methionine regulon and of enzymes involved in SAM synthesis. The polypeptide is Met repressor (Pasteurella multocida (strain Pm70)).